A 293-amino-acid polypeptide reads, in one-letter code: sn-glycerol-3-phosphate transport system permease protein UgpA (293 aa).

The next 6 helical transmembrane spans lie at 10–30 (ILPY…FFWP), 72–92 (VTVI…LLLA), 108–128 (MMIM…LFMF), 156–176 (MLLV…LFFV), 204–224 (IVFP…TVYA), and 261–281 (LGSS…LTAF). Positions 66-282 (YLNSLKVTVI…VIVIALTAFQ (217 aa)) constitute an ABC transmembrane type-1 domain.

The protein belongs to the binding-protein-dependent transport system permease family. The complex is composed of two ATP-binding proteins (UgpC), two transmembrane proteins (UgpA and UgpE) and a solute-binding protein (UgpB).

The protein resides in the cell inner membrane. In terms of biological role, part of the ABC transporter complex UgpBAEC involved in sn-glycerol-3-phosphate (G3P) import. Probably responsible for the translocation of the substrate across the membrane. This is sn-glycerol-3-phosphate transport system permease protein UgpA (ugpA) from Agrobacterium fabrum (strain C58 / ATCC 33970) (Agrobacterium tumefaciens (strain C58)).